The primary structure comprises 1236 residues: Calcium-activated potassium channel subunit alpha-1 (1236 aa).

The segment covering 1–21 (MANGGGGGGGSSGGGGGGGGS) has biased composition (gly residues). The disordered stretch occupies residues 1 to 61 (MANGGGGGGG…SSSSSSSSSV (61 aa)). At 1–86 (MANGGGGGGG…VPCDSRGQRM (86 aa)) the chain is on the extracellular side. The span at 39–60 (SSSSSSSSSSSSSSSSSSSSSS) shows a compositional bias: low complexity. Residues 87–107 (WWAFLASSMVTFFGGLFIILL) traverse the membrane as a helical segment. The Cytoplasmic segment spans residues 108–178 (WRTLKYLWTV…MISAQTLTGR (71 aa)). Residues Cys-118, Cys-119, and Cys-121 are each lipidated (S-palmitoyl cysteine). Residues 179 to 199 (VLVVLVFALSIGALVIYFIDS) form a helical membrane-spanning segment. Residues 200 to 214 (SNPIESCQNFYKDFT) are Extracellular-facing. A helical membrane pass occupies residues 215–235 (LQIDMAFNVFFLLYFGLRFIA). At 236–239 (ANDK) the chain is on the cytoplasmic side. The helical transmembrane segment at 240–260 (LWFWLEVNSVVDFFTVPPVFV) threads the bilayer. At 261–264 (SVYL) the chain is on the extracellular side. A helical membrane pass occupies residues 265–285 (NRSWLGLRFLRALRLIQFSEI). The Cytoplasmic segment spans residues 286-300 (LQFLNILKTSNSIKL). A helical membrane pass occupies residues 301–321 (VNLLSIFISTWLTAAGFIHLV). At 322-335 (ENSGDPWENFQNNQ) the chain is on the extracellular side. The segment at residues 336 to 358 (ALTYWECVYLLMVTMSTVGYGDV) is an intramembrane region (pore-forming). Residues 352 to 355 (TVGY) carry the Selectivity for potassium motif. Residues 359 to 367 (YAKTTLGRL) are Extracellular-facing. Residues 368–388 (FMVFFILGGLAMFASYVPEII) traverse the membrane as a helical segment. Residues 389–1236 (ELIGNRKKYG…KQKYVQEERL (848 aa)) lie on the Cytoplasmic side of the membrane. An RCK N-terminal 1 domain is found at 407 to 549 (RKHIVVCGHI…WNWKEGDDAI (143 aa)). Glu-439, Gln-462, and Glu-464 together coordinate Mg(2+). The segment at 556 to 576 (LGFIAQSCLAQGLSTMLANLF) is segment S7. Positions 613–633 (LSFPTVCELCFVKLKLLMIAI) are segment S8. A heme-binding motif region spans residues 677–681 (CKACH). The disordered stretch occupies residues 757-787 (EDEQPSTLSPKKKQRNGGMRNSPNTSPKLMR). The residue at position 763 (Thr-763) is a Phosphothreonine. Phosphoserine is present on residues Ser-765, Ser-778, and Ser-782. The tract at residues 837–857 (VLSGHVVVCIFGDVSSALIGL) is segment S9. The RCK N-terminal 2 domain maps to 839-983 (SGHVVVCIFG…MDRSSPDNSP (145 aa)). Position 970 is a phosphothreonine (Thr-970). 2 positions are modified to phosphoserine: Ser-978 and Ser-982. Residues 1003–1025 (TELVNDTNVQFLDQDDDDDPDTE) carry the Calcium bowl motif. 4 residues coordinate Ca(2+): Gln-1012, Asp-1015, Asp-1018, and Asp-1020. The tract at residues 1032–1052 (FACGTAFAVSVLDSLMSATYF) is segment S10. Over residues 1186-1211 (RASLSHSSHSSQSSSKKSSSVHSIPS) the composition is skewed to low complexity. The interval 1186–1236 (RASLSHSSHSSQSSSKKSSSVHSIPSTANRQNRPKSRESRDKQKYVQEERL) is disordered. Residues 1220–1236 (KSRESRDKQKYVQEERL) are compositionally biased toward basic and acidic residues. 2 positions are modified to phosphoserine: Ser-1221 and Ser-1224.

This sequence belongs to the potassium channel family. Calcium-activated (TC 1.A.1.3) subfamily. KCa1.1/KCNMA1 sub-subfamily. As to quaternary structure, homotetramer; which constitutes the calcium-activated potassium channel. Interacts with RAB11B. Interacts with beta subunits KCNMB1, KCNMB2, KCNMB3 and KCNMB4. Interacts with gamma subunits LRRC26, LRRC38, LRRC52 and LRRC55. Beta and gamma subunits are accessory, and modulate its activity. Phosphorylated. Phosphorylation by kinases such as PKA and/or PKG. In smooth muscles, phosphorylation affects its activity. Post-translationally, palmitoylation by ZDHHC22 and ZDHHC23 within the intracellular linker between the S0 and S1 transmembrane domains regulates localization to the plasma membrane. Depalmitoylated by LYPLA1 and LYPLAL1, leading to retard exit from the trans-Golgi network. In terms of tissue distribution, widely expressed. Except in myocytes, it is almost ubiquitously expressed.

It is found in the cell membrane. It carries out the reaction K(+)(in) = K(+)(out). Ethanol and carbon monoxide-bound heme increase channel activation. Heme inhibits channel activation. Potassium channel activated by both membrane depolarization or increase in cytosolic Ca(2+) that mediates export of K(+). It is also activated by the concentration of cytosolic Mg(2+). Its activation dampens the excitatory events that elevate the cytosolic Ca(2+) concentration and/or depolarize the cell membrane. It therefore contributes to repolarization of the membrane potential. Plays a key role in controlling excitability in a number of systems, such as regulation of the contraction of smooth muscle, the tuning of hair cells in the cochlea, regulation of transmitter release, and innate immunity. In smooth muscles, its activation by high level of Ca(2+), caused by ryanodine receptors in the sarcoplasmic reticulum, regulates the membrane potential. In cochlea cells, its number and kinetic properties partly determine the characteristic frequency of each hair cell and thereby helps to establish a tonotopic map. Kinetics of KCNMA1 channels are determined by alternative splicing, phosphorylation status and its combination with modulating beta subunits. Highly sensitive to both iberiotoxin (IbTx) and charybdotoxin (CTX). Possibly induces sleep when activated by melatonin and through melatonin receptor MTNR1A-dependent dissociation of G-beta and G-gamma subunits, leading to increased sensitivity to Ca(2+) and reduced synaptic transmission. Its function is as follows. Potassium channel activated by both membrane depolarization or increase in cytosolic Ca(2+) that mediates export of K(+). The sequence is that of Calcium-activated potassium channel subunit alpha-1 from Homo sapiens (Human).